Here is a 242-residue protein sequence, read N- to C-terminus: Pyridoxine 5'-phosphate synthase (242 aa).

A 3-amino-2-oxopropyl phosphate-binding site is contributed by asparagine 7. 9–10 is a 1-deoxy-D-xylulose 5-phosphate binding site; the sequence is DH. Arginine 18 lines the 3-amino-2-oxopropyl phosphate pocket. Catalysis depends on histidine 43, which acts as the Proton acceptor. The 1-deoxy-D-xylulose 5-phosphate site is built by arginine 45 and histidine 50. The active-site Proton acceptor is the glutamate 70. Threonine 100 contacts 1-deoxy-D-xylulose 5-phosphate. Histidine 190 acts as the Proton donor in catalysis. Residues glycine 191 and 212-213 contribute to the 3-amino-2-oxopropyl phosphate site; that span reads GH.

Belongs to the PNP synthase family. In terms of assembly, homooctamer; tetramer of dimers.

The protein localises to the cytoplasm. It carries out the reaction 3-amino-2-oxopropyl phosphate + 1-deoxy-D-xylulose 5-phosphate = pyridoxine 5'-phosphate + phosphate + 2 H2O + H(+). Its pathway is cofactor biosynthesis; pyridoxine 5'-phosphate biosynthesis; pyridoxine 5'-phosphate from D-erythrose 4-phosphate: step 5/5. Its function is as follows. Catalyzes the complicated ring closure reaction between the two acyclic compounds 1-deoxy-D-xylulose-5-phosphate (DXP) and 3-amino-2-oxopropyl phosphate (1-amino-acetone-3-phosphate or AAP) to form pyridoxine 5'-phosphate (PNP) and inorganic phosphate. This is Pyridoxine 5'-phosphate synthase from Thermodesulfovibrio yellowstonii (strain ATCC 51303 / DSM 11347 / YP87).